The chain runs to 238 residues: NADH-quinone oxidoreductase subunit C (238 aa).

Positions 1–20 are disordered; that stretch reads MSSPDQNPSDAAGQTGSSNE.

It belongs to the complex I 30 kDa subunit family. As to quaternary structure, NDH-1 is composed of 14 different subunits. Subunits NuoB, C, D, E, F, and G constitute the peripheral sector of the complex.

It is found in the cell membrane. It carries out the reaction a quinone + NADH + 5 H(+)(in) = a quinol + NAD(+) + 4 H(+)(out). In terms of biological role, NDH-1 shuttles electrons from NADH, via FMN and iron-sulfur (Fe-S) centers, to quinones in the respiratory chain. The immediate electron acceptor for the enzyme in this species is believed to be a menaquinone. Couples the redox reaction to proton translocation (for every two electrons transferred, four hydrogen ions are translocated across the cytoplasmic membrane), and thus conserves the redox energy in a proton gradient. The protein is NADH-quinone oxidoreductase subunit C of Mycobacterium ulcerans (strain Agy99).